Consider the following 587-residue polypeptide: Pentatricopeptide repeat-containing protein OGR1, mitochondrial (587 aa).

A mitochondrion-targeting transit peptide spans 1-30 (MSVSAAARHLESLLPRLASLRHYLQFHARL). PPR repeat units follow at residues 145–179 (DVRL…DVAT), 200–203 (FHRL), 217–251 (NEVT…GLDR), 252–286 (NVRV…DQTL), 287–315 (VSYN…MPTR), 319–349 (DGVT…MRVA), 351–381 (NMKH…MPFP), and 383–417 (DIVL…GSNV). The tract at residues 386–461 (LWQTLLGAAK…VPGFSYTEID (76 aa)) is type E motif. Residues 462–492 (GVMHKFINGDKEHPRWQEIYRALEDIVSRIS) form a type E(+) motif region. Positions 493–587 (ELGYEPETSN…DGQCSCRDYW (95 aa)) are type DYW motif.

It localises to the mitochondrion. Involved in multiple sites RNA editing events in mitochondria. Essential for C-to-U RNA editing at seven specific sites of nad2, nad4, cox2, cox3 and ccmC transcripts, all coding for proteins involved in the mitochondrial electron transport chain coupled to ATP generation. Required for normal growth and development. This chain is Pentatricopeptide repeat-containing protein OGR1, mitochondrial, found in Oryza sativa subsp. japonica (Rice).